A 229-amino-acid chain; its full sequence is UPF0758 protein GSU0386 (229 aa).

An MPN domain is found at 107–229; that stretch reads RFTSPEQVYN…FTSFVSAGLL (123 aa). Zn(2+)-binding residues include H178, H180, and D191. The JAMM motif signature appears at 178–191; it reads HNHPTGDPAPSRED.

The protein belongs to the UPF0758 family.

The polypeptide is UPF0758 protein GSU0386 (Geobacter sulfurreducens (strain ATCC 51573 / DSM 12127 / PCA)).